We begin with the raw amino-acid sequence, 217 residues long: UPF0711 protein C18orf21 homolog (217 aa).

Serine 126 is subject to Phosphoserine. 2 positions are modified to phosphothreonine: threonine 130 and threonine 139. Positions 131-190 (AANKASPKTPKRTAPGSANLGQSTNGSKGKSPSLTIRTPTSGQSTPICSSRNGSKRKKHF) are disordered. Positions 149-182 (NLGQSTNGSKGKSPSLTIRTPTSGQSTPICSSRN) are enriched in polar residues.

The protein belongs to the UPF0711 family.

The sequence is that of UPF0711 protein C18orf21 homolog from Mus musculus (Mouse).